The sequence spans 149 residues: Sec-independent protein translocase protein TatB (149 aa).

A helical membrane pass occupies residues 1–22 (MFDGIGFMELLLIGVLGLIVLG). Residues 86–113 (LKQAAQSVNRPYQVQDTPSAQDNQIHNP) show a composition bias toward polar residues. The segment at 86–149 (LKQAAQSVNR…DPRSNTKANG (64 aa)) is disordered. The segment covering 114-135 (ASQTVSTEASSTSASSAPKSES) has biased composition (low complexity).

The protein belongs to the TatB family. The Tat system comprises two distinct complexes: a TatABC complex, containing multiple copies of TatA, TatB and TatC subunits, and a separate TatA complex, containing only TatA subunits. Substrates initially bind to the TatABC complex, which probably triggers association of the separate TatA complex to form the active translocon.

It is found in the cell inner membrane. In terms of biological role, part of the twin-arginine translocation (Tat) system that transports large folded proteins containing a characteristic twin-arginine motif in their signal peptide across membranes. Together with TatC, TatB is part of a receptor directly interacting with Tat signal peptides. TatB may form an oligomeric binding site that transiently accommodates folded Tat precursor proteins before their translocation. This chain is Sec-independent protein translocase protein TatB, found in Shewanella oneidensis (strain ATCC 700550 / JCM 31522 / CIP 106686 / LMG 19005 / NCIMB 14063 / MR-1).